The primary structure comprises 150 residues: Meiotically up-regulated gene 108 protein (150 aa).

The span at 1–11 shows a compositional bias: polar residues; the sequence is MANRFTSSDQT. The interval 1 to 150 is disordered; the sequence is MANRFTSSDQ…RDISLLGSTI (150 aa). Residues 12-23 show a composition bias toward basic and acidic residues; sequence QETHGHHVDKHS. A compositionally biased stretch (polar residues) spans 83–93; that stretch reads NRSSQHTGRVN.

It localises to the cytoplasm. The protein resides in the nucleus. Functionally, has a role in meiosis. This chain is Meiotically up-regulated gene 108 protein (mug108), found in Schizosaccharomyces pombe (strain 972 / ATCC 24843) (Fission yeast).